Reading from the N-terminus, the 426-residue chain is Serine--tRNA ligase (426 aa).

Residue 232–234 (TAE) coordinates L-serine. Position 263-265 (263-265 (RRE)) interacts with ATP. Glutamate 286 is a binding site for L-serine. 350–353 (EISS) lines the ATP pocket. Residue serine 385 participates in L-serine binding.

Belongs to the class-II aminoacyl-tRNA synthetase family. Type-1 seryl-tRNA synthetase subfamily. As to quaternary structure, homodimer. The tRNA molecule binds across the dimer.

The protein resides in the cytoplasm. The catalysed reaction is tRNA(Ser) + L-serine + ATP = L-seryl-tRNA(Ser) + AMP + diphosphate + H(+). It carries out the reaction tRNA(Sec) + L-serine + ATP = L-seryl-tRNA(Sec) + AMP + diphosphate + H(+). The protein operates within aminoacyl-tRNA biosynthesis; selenocysteinyl-tRNA(Sec) biosynthesis; L-seryl-tRNA(Sec) from L-serine and tRNA(Sec): step 1/1. Functionally, catalyzes the attachment of serine to tRNA(Ser). Is also able to aminoacylate tRNA(Sec) with serine, to form the misacylated tRNA L-seryl-tRNA(Sec), which will be further converted into selenocysteinyl-tRNA(Sec). In Fervidobacterium nodosum (strain ATCC 35602 / DSM 5306 / Rt17-B1), this protein is Serine--tRNA ligase.